A 459-amino-acid polypeptide reads, in one-letter code: Interleukin-1 receptor-associated kinase 4 (459 aa).

At M1 the chain carries N-acetylmethionine. Residues R20–A104 enclose the Death domain. N6-acetyllysine is present on K34. Positions R115–S161 are disordered. A Protein kinase domain is found at S186–L454. Residues M192 to V200 and K213 contribute to the ATP site. Catalysis depends on D311, which acts as the Proton acceptor. ATP contacts are provided by residues K313–N316 and D329. Phosphothreonine occurs at positions 342 and 345. S346 carries the phosphoserine modification.

This sequence belongs to the protein kinase superfamily. TKL Ser/Thr protein kinase family. Pelle subfamily. In terms of assembly, associates with MYD88 and IRAK2 to form a ternary complex called the Myddosome. Once phosphorylated, IRAK4 dissociates from the receptor complex and then associates with the TNF receptor-associated factor 6 (TRAF6), IRAK1, and PELI1; this intermediate complex is required for subsequent NF-kappa-B activation. Direct binding of SMAD6 to PELI1 prevents complex formation and hence negatively regulates IL1R-TLR signaling and eventually NF-kappa-B-mediated gene expression. Interacts with IL1RL1. Interacts (when phosphorylated) with IRAK1. May interact (when phosphorylated) with IRAK3. Mg(2+) serves as cofactor. Phosphorylated.

It is found in the cytoplasm. The catalysed reaction is L-seryl-[protein] + ATP = O-phospho-L-seryl-[protein] + ADP + H(+). It catalyses the reaction L-threonyl-[protein] + ATP = O-phospho-L-threonyl-[protein] + ADP + H(+). Functionally, serine/threonine-protein kinase that plays a critical role in initiating innate immune response against foreign pathogens. Involved in Toll-like receptor (TLR) and IL-1R signaling pathways. Is rapidly recruited by MYD88 to the receptor-signaling complex upon TLR activation to form the Myddosome together with IRAK2. Phosphorylates initially IRAK1, thus stimulating the kinase activity and intensive autophosphorylation of IRAK1. Phosphorylates E3 ubiquitin ligases Pellino proteins (PELI1, PELI2 and PELI3) to promote pellino-mediated polyubiquitination of IRAK1. Then, the ubiquitin-binding domain of IKBKG/NEMO binds to polyubiquitinated IRAK1 bringing together the IRAK1-MAP3K7/TAK1-TRAF6 complex and the NEMO-IKKA-IKKB complex. In turn, MAP3K7/TAK1 activates IKKs (CHUK/IKKA and IKBKB/IKKB) leading to NF-kappa-B nuclear translocation and activation. Alternatively, phosphorylates TIRAP to promote its ubiquitination and subsequent degradation. Phosphorylates NCF1 and regulates NADPH oxidase activation after LPS stimulation suggesting a similar mechanism during microbial infections. The sequence is that of Interleukin-1 receptor-associated kinase 4 (Irak4) from Mus musculus (Mouse).